The following is a 651-amino-acid chain: Peptide-N(4)-(N-acetyl-beta-glucosaminyl)asparagine amidase (651 aa).

The PUB domain maps to 29–90 (EASRLLLTYA…EGETHMVFPK (62 aa)). Positions 246, 249, 279, and 282 each coordinate Zn(2+). Cys-305 serves as the catalytic Nucleophile. Residues His-332 and Asp-349 contribute to the active site. One can recognise a PAW domain in the interval 450-651 (EFGGRTSGSM…LEMIIKLADL (202 aa)).

Belongs to the transglutaminase-like superfamily. PNGase family. Zn(2+) serves as cofactor.

It localises to the cytoplasm. The catalysed reaction is Hydrolysis of an N(4)-(acetyl-beta-D-glucosaminyl)asparagine residue in which the glucosamine residue may be further glycosylated, to yield a (substituted) N-acetyl-beta-D-glucosaminylamine and a peptide containing an aspartate residue.. In terms of biological role, specifically deglycosylates the denatured form of N-linked glycoproteins in the cytoplasm and assists their proteasome-mediated degradation. Cleaves the beta-aspartyl-glucosamine (GlcNAc) of the glycan and the amide side chain of Asn, converting Asn to Asp. Prefers proteins containing high-mannose over those bearing complex type oligosaccharides. Can recognize misfolded proteins in the endoplasmic reticulum that are exported to the cytosol to be destroyed and deglycosylate them, while it has no activity toward native proteins. Deglycosylation is a prerequisite for subsequent proteasome-mediated degradation of some, but not all, misfolded glycoproteins. In Gallus gallus (Chicken), this protein is Peptide-N(4)-(N-acetyl-beta-glucosaminyl)asparagine amidase (NGLY1).